The primary structure comprises 647 residues: MEVRVEGQMVEGQAGDSVAAILQKALSGKKFKAVVAARALDSAEELLDLSSPVPAGCTGIEPVYADSPEGLQILRHSTAHVMAAAVKQLFPKTRVTIGPSIESGFYYDFDVEKPFSSEDFSAIEAEMQRIANAREPFTREVLSRAEAIERFKAMGEDYKVEIIEGIDADTVSVYTCSGFADLCRGPHVPHTGFAKASKLMSVAGAYWRGDEKNRMLSRIYGTAFADEKALAAYLKQMEEAKRRDHRKLGRELSLFTFKEDVAPGMVFWLPKGMLVRTILEDFWRKEHLKRGYDIVQGPQLLRVETWQKSGHYDHYRENMYFTQIEEDAYGVKPMNCISHMLIYGNELHSYRDLPQRYFELGVVHRHEKSGVLHGLLRVRQFTQDDAHIICAPEQLEGEILEVIHLIRDLMNLFGFEYKVAVSTRPESSIGTDEAWEMATSALVQAVEKAGLPYTINEGDGAFYGPKIDVRLLDCIGREWQCSTIQVDFTLPERFDLTYVGQDGERHRPVMVHRAIMGSLERFIGILVENFAGALPTWLAPEQARLLTVTEAGDEAVSSMLEEFKALGIRAQADTRNEKLGFKVREAQLAKVPYILVVGEKEVQAGGANVRLRNGDNLGLKSVAEIAALIRTDAEEPFKQGGMRYSFA.

A TGS domain is found at 1–63 (MEVRVEGQMV…PAGCTGIEPV (63 aa)). The tract at residues 244-535 (DHRKLGRELS…LVENFAGALP (292 aa)) is catalytic. Residues C336, H387, and H512 each coordinate Zn(2+).

This sequence belongs to the class-II aminoacyl-tRNA synthetase family. As to quaternary structure, homodimer. Requires Zn(2+) as cofactor.

The protein resides in the cytoplasm. It carries out the reaction tRNA(Thr) + L-threonine + ATP = L-threonyl-tRNA(Thr) + AMP + diphosphate + H(+). Its function is as follows. Catalyzes the attachment of threonine to tRNA(Thr) in a two-step reaction: L-threonine is first activated by ATP to form Thr-AMP and then transferred to the acceptor end of tRNA(Thr). Also edits incorrectly charged L-seryl-tRNA(Thr). The sequence is that of Threonine--tRNA ligase from Desulfovibrio desulfuricans (strain ATCC 27774 / DSM 6949 / MB).